Here is a 628-residue protein sequence, read N- to C-terminus: Keratin, type II cytoskeletal 3 (628 aa).

The interval 1–21 is disordered; it reads MSRQASKTSGGGSQGFSGRSA. The head stretch occupies residues 1–197; the sequence is MSRQASKTSG…DPQIGQVKAQ (197 aa). Phosphoserine occurs at positions 13 and 56. Positions 198–233 are coil 1A; the sequence is EREQIKTLNNKFASFIDKVRFLEQQNKVLETKWNLL. The region spanning 198 to 513 is the IF rod domain; it reads EREQIKTLNN…KLLEGEEYRM (316 aa). A linker 1 region spans residues 234–254; sequence QQQGTSSISGTNNLEPLFENH. The segment at 255–346 is coil 1B; it reads INYLRSYLDN…TLYDAELSQM (92 aa). Lys-296 carries the N6,N6-dimethyllysine modification. Residues 347–370 form a linker 12 region; that stretch reads QSHISDTSVVLSMDNNRSLDLDSI. A Phosphoserine modification is found at Ser-364. The tract at residues 371–509 is coil 2; the sequence is IAEVRAQYED…ATYRKLLEGE (139 aa). Residues 510 to 628 are tail; sequence EYRMSGECPS…SSQSSQRYSR (119 aa). A disordered region spans residues 605-628; sequence SSASNRGGSIKFSQSSQSSQRYSR. Residues 617-628 are compositionally biased toward low complexity; it reads SQSSQSSQRYSR.

It belongs to the intermediate filament family. Heterotetramer of two type I and two type II keratins. Keratin-3 associates with keratin-12. As to expression, cornea specific.

The protein is Keratin, type II cytoskeletal 3 (KRT3) of Homo sapiens (Human).